The sequence spans 378 residues: Glutamate 5-kinase (378 aa).

K20 contributes to the ATP binding site. Residues S60, D147, and N159 each coordinate substrate. ATP contacts are provided by residues T179–D180 and T221–K227. Residues R286–M364 enclose the PUA domain.

This sequence belongs to the glutamate 5-kinase family.

It is found in the cytoplasm. The catalysed reaction is L-glutamate + ATP = L-glutamyl 5-phosphate + ADP. Its pathway is amino-acid biosynthesis; L-proline biosynthesis; L-glutamate 5-semialdehyde from L-glutamate: step 1/2. Its function is as follows. Catalyzes the transfer of a phosphate group to glutamate to form L-glutamate 5-phosphate. The chain is Glutamate 5-kinase from Bordetella parapertussis (strain 12822 / ATCC BAA-587 / NCTC 13253).